The chain runs to 208 residues: UPF0319 protein VSAL_I2129 (208 aa).

Residues M1–A21 form the signal peptide.

The protein belongs to the UPF0319 family.

This chain is UPF0319 protein VSAL_I2129, found in Aliivibrio salmonicida (strain LFI1238) (Vibrio salmonicida (strain LFI1238)).